Here is a 124-residue protein sequence, read N- to C-terminus: RTLRDLLREQHSKEDSERLMEQQGALLKRLAEADSEKARLLLLLQDKDKEVEELLQEIQCEKAQAKTASELSKSMESMRGHLQAQLRCKEAENSRLCMQIKNLERSGNQHKAEVEAIMEQLKEL.

The stretch at 13 to 124 forms a coiled coil; it reads KEDSERLMEQ…EAIMEQLKEL (112 aa).

This sequence belongs to the ODF2 family. Self-associates. Associates with microtubules and forms a fibrillar structure partially linked to the microtubule network. Interacts through its C-terminus with PLK1. Interacts with ODF1. Interacts with MARK4; the interaction is required for localization of ODF2 to centrioles. Interacts with TSSK4. Interacts with AKNA. Interacts with QRICH2. Interacts with CFAP58. Interacts with BBOF1. Interacts with CCDC38. Interacts with CCDC42. Tyrosine phosphorylated. In terms of tissue distribution, detected in sperm flagella (at protein level).

The protein resides in the cytoplasm. It localises to the cytoskeleton. The protein localises to the microtubule organizing center. Its subcellular location is the centrosome. It is found in the cell projection. The protein resides in the cilium. It localises to the centriole. The protein localises to the spindle pole. Its subcellular location is the flagellum. Seems to be a major component of sperm tail outer dense fibers (ODF). ODFs are filamentous structures located on the outside of the axoneme in the midpiece and principal piece of the mammalian sperm tail and may help to maintain the passive elastic structures and elastic recoil of the sperm tail. May have a modulating influence on sperm motility. Functions as a general scaffold protein that is specifically localized at the distal/subdistal appendages of mother centrioles. Component of the centrosome matrix required for the localization of PLK1 and NIN to the centrosomes. Required for the formation and/or maintenance of normal CETN1 assembly. The sequence is that of Outer dense fiber protein 2 from Mesocricetus auratus (Golden hamster).